Here is a 1177-residue protein sequence, read N- to C-terminus: MFELNNFDAIQIGLASPEQIREWSRGEVKKPETINYRTLKPEKDGLFCERIFGPMKDWECHCGKYKRVRYKGIVCDRCGVEVTKAKVRRERMGHIELAAPVSHIWYFKGIPSRMGLLMDMSPRALEKVLYFASYIVIDPKETPLLKKQLLNEKEYREAVDKYGDDSFVAGMGAEAIQELLGEIDLVAGAKELKEDLKQSTGQKRVRIIRRLEVVESFAKSGNDPKWMIINVIPVIPPDLRPMVQLDGGRFATSDLNDLYRRVINRNNRLKKLLDLGAPDIIVRNEKRMLQEAVDALIDNGRRGRPVTGPGNRPLKSLSDMLKGKQGRFRQNLLGKRVDYSGRSVIVVGPELKMYQCGLPKEMALELFKPFVMKKLVQDGVAHNIKSAKRMVERVLPQVWDVLEEVITDHPVLLNRAPTLHRLGIQAFQPVLVEGRAIKLHPLACTAYNADFDGDQMAVHVPLSVEAQAEARFLMLAAGNILKPSDGKPVCVPTQDMVLGSYYLTMDRTGAKGEGMTFSNKDEAVMAYESKYIDIHAQINVRVYKEIDGVLKSGIIKTTVGKLIFNESIPQDLGFVNREDEKEKFNLEIDFLVTKKSLGKVIDQSYMLHGPTKTSIMLDNIKALGYHYSSIGAVTVAASDMIVPPVKYDLLHEADETIDKIEKMYKRGFISEDERYERVIEKWTKTTEEVADALMDSLDKFNPIYMMADSGARGSKSQIKQLAGMRGLMASPSGKILELPIRASFREGLDVLEYFISTHGARKGNADTALKTADSGYLTRRLVDVCQDVIVREEDCGTDDGIYVSEIKEGSEVIEELKERLIGRYTAEDIVNPNSGDIIVAKNEYMDPVIADKVVSAGIKKVKIRSAFTCDCKVGVCAKCYGMNMATAKKIDIGEAVGIIAAQSIGEPGTQLTMRTFHTGGVAGSDITQGLPRVEELFEARKPKGLAIVSEIHGNVRIEETKKKRAVFVMGADGEECSYDIPFGSRLKVSDGDYIEAGDEITEGSVNPHDIMNIKGVDGARRYLLSEVQKVYRLQGVDINDKHLEVVVKQMTRKVKVLESGDTELLPGTMIDIFDFQGANAKVREFGGEEAKGEQSLLGITKAALATDSFLSAASFQETTRVLTEAAIKGKVDPLIGLKENVIIGKLIPAGTGMMRYRGLNLNTKNEKIEDNETEIVE.

Residues C60, C62, C75, and C78 each contribute to the Zn(2+) site. The Mg(2+) site is built by D450, D452, and D454. Zn(2+) contacts are provided by C795, C869, C876, and C879.

The protein belongs to the RNA polymerase beta' chain family. As to quaternary structure, the RNAP catalytic core consists of 2 alpha, 1 beta, 1 beta' and 1 omega subunit. When a sigma factor is associated with the core the holoenzyme is formed, which can initiate transcription. It depends on Mg(2+) as a cofactor. The cofactor is Zn(2+).

The enzyme catalyses RNA(n) + a ribonucleoside 5'-triphosphate = RNA(n+1) + diphosphate. In terms of biological role, DNA-dependent RNA polymerase catalyzes the transcription of DNA into RNA using the four ribonucleoside triphosphates as substrates. This chain is DNA-directed RNA polymerase subunit beta', found in Clostridium botulinum (strain Alaska E43 / Type E3).